Consider the following 179-residue polypeptide: Ribosome maturation factor RimM (179 aa).

Positions 102–175 (VEMWWDRDLV…RIVVDPPPGL (74 aa)) constitute a PRC barrel domain.

The protein belongs to the RimM family. Binds ribosomal protein uS19.

It localises to the cytoplasm. An accessory protein needed during the final step in the assembly of 30S ribosomal subunit, possibly for assembly of the head region. Essential for efficient processing of 16S rRNA. May be needed both before and after RbfA during the maturation of 16S rRNA. It has affinity for free ribosomal 30S subunits but not for 70S ribosomes. The sequence is that of Ribosome maturation factor RimM from Frankia casuarinae (strain DSM 45818 / CECT 9043 / HFP020203 / CcI3).